The chain runs to 215 residues: MPFGTLYTRPFNPRSLAILAIAKANNLPLKIKTITSFKDATEEYLQLNPLGKIPTFVGADGYVLTESIAIALYDSNTTLLGTTGQEYASIIRWMAFGITEILPALGGWFNPLIGRANFNADNIYQSKDDTLARLKILDNHLCGREYLVGETLSLADLFVLGIVQGAFRFFLDKRWRDEHRNLSTWFERVHALPIVVDVAGPPVLAEYEMPIQPPK.

One can recognise a GST N-terminal domain in the interval 2–82; sequence PFGTLYTRPF…YDSNTTLLGT (81 aa). K52 and E66 together coordinate glutathione. Substrate is bound at residue K52. The 129-residue stretch at 83 to 211 folds into the GST C-terminal domain; that stretch reads TGQEYASIIR…PVLAEYEMPI (129 aa).

Belongs to the GST superfamily. Glutathione is required as a cofactor.

The protein operates within mycotoxin biosynthesis; sterigmatocystin biosynthesis. In terms of biological role, glutathione S-transferase; part of the gene cluster that mediates the biosynthesis of sterigmatocystin (ST), a polyketide-derived furanocoumarin which is part of the most toxic and carcinogenic compounds among the known mycotoxins. The first step in the biosynthesis of sterigmatocystin is the production of hexanoate by the fatty acid synthase (FAS) units stcJ and stcK. The polyketide backbone is assembled by the non-reducing polyketide synthase stcA by condensation of the starter hexanoyl-CoA and 7 malonyl-CoA extender units followed by cyclization and release of norsolorinic acid. Norsolorinic acid is the first stable intermediate in the biosynthesis of sterigmatocystin and is converted into averantin (AVN) by the ketoreductase stcE which reduces the hexanoate ketone to an alcohol. Averantin is then oxidized into 5'-hydroxyaverantin (HAVN) by the cytochrome P450 monooxygenase stcF. 5'-hydroxyaverantin is further converted to 5'-oxyaverantin (OAVN) by the 5'-hydroxyaverantin dehydrogenase stcG. The next step is the conversion of OAVN into averufin (AVF) which is catalyzed by a yet to be identified enzyme. The cytochrome P450 monooxygenase stcB and the flavin-binding monooxygenase stcW are both required for the conversion of averufin to 1-hydroxyversicolorone. The esterase stcI probably catalyzes the formation of versiconal hemiacetal acetate from 1-hydroxyversicolorone. The oxydoreductase stcN then probably catalyzes the biosynthetic step from versiconal to versicolorin B (VERB). The next step is performed by the versicolorin B desaturase stcL to produce versicolorin A (VERA). The ketoreductase stcU and the cytochrome P450 monooxygenase stcS are involved in the conversion of versicolorin A to demethylsterigmatocystin. The Baeyer-Villiger oxidas stcQ and the reductase stcR might be involved in the biosynthetic step from versicolorin A to demethylsterigmatocystin. The final step in the biosynthesis of sterigmatocystin is the methylation of demethylsterigmatocystin catalyzed by the methyltransferase stcP. The chain is Glutathione S-transferase stcT from Emericella nidulans (strain FGSC A4 / ATCC 38163 / CBS 112.46 / NRRL 194 / M139) (Aspergillus nidulans).